The primary structure comprises 972 residues: RNA polymerase-associated protein RapA (972 aa).

Residues Glu-164–Asp-334 form the Helicase ATP-binding domain. Residue Asp-177–Thr-184 coordinates ATP. The short motif at Asp-280–His-283 is the DEAH box element. One can recognise a Helicase C-terminal domain in the interval Arg-493–Ile-671.

It belongs to the SNF2/RAD54 helicase family. RapA subfamily. In terms of assembly, interacts with the RNAP. Has a higher affinity for the core RNAP than for the holoenzyme. Its ATPase activity is stimulated by binding to RNAP.

Functionally, transcription regulator that activates transcription by stimulating RNA polymerase (RNAP) recycling in case of stress conditions such as supercoiled DNA or high salt concentrations. Probably acts by releasing the RNAP, when it is trapped or immobilized on tightly supercoiled DNA. Does not activate transcription on linear DNA. Probably not involved in DNA repair. In Photobacterium profundum (strain SS9), this protein is RNA polymerase-associated protein RapA.